A 251-amino-acid chain; its full sequence is CDP-diacylglycerol pyrophosphatase (251 aa).

Residues 4–24 form a helical membrane-spanning segment; it reads AGLLFLVMIVIAVVAAGIGYW.

Belongs to the Cdh family.

It localises to the cell inner membrane. The enzyme catalyses a CDP-1,2-diacyl-sn-glycerol + H2O = a 1,2-diacyl-sn-glycero-3-phosphate + CMP + 2 H(+). The protein operates within phospholipid metabolism; CDP-diacylglycerol degradation; phosphatidate from CDP-diacylglycerol: step 1/1. This Shigella flexneri protein is CDP-diacylglycerol pyrophosphatase.